We begin with the raw amino-acid sequence, 29 residues long: NADH dehydrogenase [ubiquinone] 1 beta subcomplex subunit 10 (29 aa).

Residues 1–29 (GRKKGVQFDEGAPDDFDPNNPYKKDVAFL) form a disordered region.

The protein belongs to the complex I NDUFB10 subunit family. Complex I is composed of about 45 different subunits.

The protein localises to the mitochondrion inner membrane. In terms of biological role, accessory subunit of the mitochondrial membrane respiratory chain NADH dehydrogenase (Complex I), that is believed not to be involved in catalysis. Complex I functions in the transfer of electrons from NADH to the respiratory chain. The immediate electron acceptor for the enzyme is believed to be ubiquinone. The chain is NADH dehydrogenase [ubiquinone] 1 beta subcomplex subunit 10 from Solanum tuberosum (Potato).